The sequence spans 1080 residues: Carbamoyl phosphate synthase large chain (1080 aa).

Positions 1-403 (MPKRTDLRTI…SLQKAVRGLE (403 aa)) are carboxyphosphate synthetic domain. ATP-binding residues include arginine 129, arginine 169, glycine 175, glycine 176, glutamate 208, valine 210, glutamate 215, glycine 241, valine 242, histidine 243, glutamine 285, and glutamate 299. The ATP-grasp 1 domain maps to 133-328 (RVAMQEIGLE…IAKIAAKLAV (196 aa)). The Mg(2+) site is built by glutamine 285, glutamate 299, and asparagine 301. 3 residues coordinate Mn(2+): glutamine 285, glutamate 299, and asparagine 301. The tract at residues 404-554 (TGKVGLEPTG…YSTYEEECEA (151 aa)) is oligomerization domain. A carbamoyl phosphate synthetic domain region spans residues 555–942 (APSDRRKIMI…AFARAQEAGD (388 aa)). In terms of domain architecture, ATP-grasp 2 spans 679–876 (QKLVQQLGLR…LAKIAARCMT (198 aa)). 10 residues coordinate ATP: arginine 715, arginine 754, leucine 756, glutamate 761, glycine 787, valine 788, histidine 789, serine 790, glutamine 830, and glutamate 847. Residues glutamine 830, glutamate 847, and asparagine 849 each contribute to the Mg(2+) site. Mn(2+) is bound by residues glutamine 830, glutamate 847, and asparagine 849. Positions 943-1080 (IRAPQPGRAF…LQELHKELQV (138 aa)) constitute an MGS-like domain. The interval 943 to 1080 (IRAPQPGRAF…LQELHKELQV (138 aa)) is allosteric domain.

Belongs to the CarB family. Composed of two chains; the small (or glutamine) chain promotes the hydrolysis of glutamine to ammonia, which is used by the large (or ammonia) chain to synthesize carbamoyl phosphate. Tetramer of heterodimers (alpha,beta)4. Mg(2+) is required as a cofactor. Mn(2+) serves as cofactor.

The catalysed reaction is hydrogencarbonate + L-glutamine + 2 ATP + H2O = carbamoyl phosphate + L-glutamate + 2 ADP + phosphate + 2 H(+). It carries out the reaction hydrogencarbonate + NH4(+) + 2 ATP = carbamoyl phosphate + 2 ADP + phosphate + 2 H(+). The protein operates within amino-acid biosynthesis; L-arginine biosynthesis; carbamoyl phosphate from bicarbonate: step 1/1. It participates in pyrimidine metabolism; UMP biosynthesis via de novo pathway; (S)-dihydroorotate from bicarbonate: step 1/3. Its function is as follows. Large subunit of the glutamine-dependent carbamoyl phosphate synthetase (CPSase). CPSase catalyzes the formation of carbamoyl phosphate from the ammonia moiety of glutamine, carbonate, and phosphate donated by ATP, constituting the first step of 2 biosynthetic pathways, one leading to arginine and/or urea and the other to pyrimidine nucleotides. The large subunit (synthetase) binds the substrates ammonia (free or transferred from glutamine from the small subunit), hydrogencarbonate and ATP and carries out an ATP-coupled ligase reaction, activating hydrogencarbonate by forming carboxy phosphate which reacts with ammonia to form carbamoyl phosphate. The polypeptide is Carbamoyl phosphate synthase large chain (Xylella fastidiosa (strain 9a5c)).